We begin with the raw amino-acid sequence, 124 residues long: Small ribosomal subunit protein uS12 (124 aa).

3-methylthioaspartic acid is present on Asp-89. Positions 105 to 124 (QGVKNRKQARSRYGAKKEKS) are disordered. Basic residues predominate over residues 108–118 (KNRKQARSRYG).

The protein belongs to the universal ribosomal protein uS12 family. As to quaternary structure, part of the 30S ribosomal subunit. Contacts proteins S8 and S17. May interact with IF1 in the 30S initiation complex.

Functionally, with S4 and S5 plays an important role in translational accuracy. Interacts with and stabilizes bases of the 16S rRNA that are involved in tRNA selection in the A site and with the mRNA backbone. Located at the interface of the 30S and 50S subunits, it traverses the body of the 30S subunit contacting proteins on the other side and probably holding the rRNA structure together. The combined cluster of proteins S8, S12 and S17 appears to hold together the shoulder and platform of the 30S subunit. The protein is Small ribosomal subunit protein uS12 of Mycobacteroides abscessus (strain ATCC 19977 / DSM 44196 / CCUG 20993 / CIP 104536 / JCM 13569 / NCTC 13031 / TMC 1543 / L948) (Mycobacterium abscessus).